The primary structure comprises 189 residues: Protein F29A7.6 (189 aa).

Residues 124-161 (KSLGGQKLAALDKKSQSKRERRQQNERNEETTGGRRFN) form a disordered region. Over residues 133–161 (ALDKKSQSKRERRQQNERNEETTGGRRFN) the composition is skewed to basic and acidic residues.

The protein belongs to the MPP6 family.

The sequence is that of Protein F29A7.6 from Caenorhabditis elegans.